A 201-amino-acid polypeptide reads, in one-letter code: Recombination protein RecR (201 aa).

The segment at 57–72 (CQQCRNFTEEALCEIC) adopts a C4-type zinc-finger fold. In terms of domain architecture, Toprim spans 81–176 (TTLCIVETPG…NISRIAHGVP (96 aa)).

This sequence belongs to the RecR family.

Its function is as follows. May play a role in DNA repair. It seems to be involved in an RecBC-independent recombinational process of DNA repair. It may act with RecF and RecO. This chain is Recombination protein RecR, found in Colwellia psychrerythraea (strain 34H / ATCC BAA-681) (Vibrio psychroerythus).